A 341-amino-acid chain; its full sequence is Probable galacturonosyltransferase-like 2 (341 aa).

The Cytoplasmic segment spans residues 1–4 (MHSK). A helical; Signal-anchor for type II membrane protein transmembrane segment spans residues 5–22 (FILYLSILAVFTVSFAGG). Residues 23–341 (ERFKEAPKFF…LESRFDLIES (319 aa)) are Lumenal-facing. Asparagine 190 carries N-linked (GlcNAc...) asparagine glycosylation.

This sequence belongs to the glycosyltransferase 8 family.

It localises to the golgi apparatus membrane. The protein operates within glycan metabolism; pectin biosynthesis. Its function is as follows. May be involved in pectin and/or xylans biosynthesis in cell walls. The polypeptide is Probable galacturonosyltransferase-like 2 (GATL2) (Arabidopsis thaliana (Mouse-ear cress)).